We begin with the raw amino-acid sequence, 266 residues long: MVTAALKRFWSGGHGEAGGEAGGATTVAVKPGLWTRLSTWAGALLRDYAEACGDAAAAARARPGRAALYVGLLGGAAACCALAPSEAAFEEALLDASGSLLLLAPATRNRHSEAFLQRLLWLRGRGRLRHVNLGFCSLVYEAPFDAQASLYQARCRYLQPRWVDFPGRILDVGFVGRWWILQNRMHDCDINDDEFLHLPAHLRVVAPHQLHSEANERLFEEKYKPIILTDDQVDQALWEEQVLQKERKDRLALSEADSLVQSDVSR.

The transit peptide at 1–37 (MVTAALKRFWSGGHGEAGGEAGGATTVAVKPGLWTRL) directs the protein to the mitochondrion. At 38–65 (STWAGALLRDYAEACGDAAAAARARPGR) the chain is on the mitochondrial matrix side. The helical transmembrane segment at 66 to 83 (AALYVGLLGGAAACCALA) threads the bilayer. Over 84 to 266 (PSEAAFEEAL…DSLVQSDVSR (183 aa)) the chain is Mitochondrial intermembrane.

As to quaternary structure, component of the TIM22 complex, which core is composed of TIMM22, associated with TIMM10 (TIMM10A and/or TIMM10B), TIMM9, AGK and TIMM29. Interacts with TIMM10B; the interaction is direct. Interacts with TOMM40; linking the TIM22 complex to the TOM complex. Interacts with TIMM22 (when oxidized); the interaction is direct.

It localises to the mitochondrion inner membrane. Component of the TIM22 complex, a complex that mediates the import and insertion of multi-pass transmembrane proteins into the mitochondrial inner membrane. The TIM22 complex forms a twin-pore translocase that uses the membrane potential as the external driving force. Required for the stability of the TIM22 complex and functions in the assembly of the TIMM22 protein into the TIM22 complex. May facilitate cooperation between TIM22 and TOM complexes by interacting with TOMM40. The protein is Mitochondrial import inner membrane translocase subunit Tim29 (Timm29) of Mus musculus (Mouse).